The following is a 370-amino-acid chain: tRNA 2-selenouridine synthase (370 aa).

Residues 12–136 (FLDDVPMMDM…MRTFLLETTQ (125 aa)) enclose the Rhodanese domain. Catalysis depends on cysteine 95, which acts as the S-selanylcysteine intermediate.

This sequence belongs to the SelU family. As to quaternary structure, monomer.

It carries out the reaction 5-methylaminomethyl-2-thiouridine(34) in tRNA + selenophosphate + (2E)-geranyl diphosphate + H2O + H(+) = 5-methylaminomethyl-2-selenouridine(34) in tRNA + (2E)-thiogeraniol + phosphate + diphosphate. The catalysed reaction is 5-methylaminomethyl-2-thiouridine(34) in tRNA + (2E)-geranyl diphosphate = 5-methylaminomethyl-S-(2E)-geranyl-thiouridine(34) in tRNA + diphosphate. It catalyses the reaction 5-methylaminomethyl-S-(2E)-geranyl-thiouridine(34) in tRNA + selenophosphate + H(+) = 5-methylaminomethyl-2-(Se-phospho)selenouridine(34) in tRNA + (2E)-thiogeraniol. The enzyme catalyses 5-methylaminomethyl-2-(Se-phospho)selenouridine(34) in tRNA + H2O = 5-methylaminomethyl-2-selenouridine(34) in tRNA + phosphate. Its function is as follows. Involved in the post-transcriptional modification of the uridine at the wobble position (U34) of tRNA(Lys), tRNA(Glu) and tRNA(Gln). Catalyzes the conversion of 2-thiouridine (S2U-RNA) to 2-selenouridine (Se2U-RNA). Acts in a two-step process involving geranylation of 2-thiouridine (S2U) to S-geranyl-2-thiouridine (geS2U) and subsequent selenation of the latter derivative to 2-selenouridine (Se2U) in the tRNA chain. The protein is tRNA 2-selenouridine synthase of Pseudomonas putida (strain GB-1).